A 187-amino-acid chain; its full sequence is V-type ATP synthase subunit E (187 aa).

Belongs to the V-ATPase E subunit family.

In terms of biological role, produces ATP from ADP in the presence of a proton gradient across the membrane. The chain is V-type ATP synthase subunit E from Clostridioides difficile (strain 630) (Peptoclostridium difficile).